Reading from the N-terminus, the 348-residue chain is Nicotinate-nucleotide--dimethylbenzimidazole phosphoribosyltransferase (348 aa).

Residue glutamate 315 is the Proton acceptor of the active site.

The protein belongs to the CobT family.

The catalysed reaction is 5,6-dimethylbenzimidazole + nicotinate beta-D-ribonucleotide = alpha-ribazole 5'-phosphate + nicotinate + H(+). It participates in nucleoside biosynthesis; alpha-ribazole biosynthesis; alpha-ribazole from 5,6-dimethylbenzimidazole: step 1/2. Catalyzes the synthesis of alpha-ribazole-5'-phosphate from nicotinate mononucleotide (NAMN) and 5,6-dimethylbenzimidazole (DMB). This chain is Nicotinate-nucleotide--dimethylbenzimidazole phosphoribosyltransferase, found in Dechloromonas aromatica (strain RCB).